The chain runs to 398 residues: Acetate kinase (398 aa).

Mg(2+) is bound at residue Asn-7. ATP is bound at residue Lys-14. Substrate is bound at residue Arg-90. Residue Asp-147 is the Proton donor/acceptor of the active site. Residues 207–211 (HLGNG), 282–284 (DMR), and 330–334 (GIGEN) each bind ATP. Glu-383 contributes to the Mg(2+) binding site.

This sequence belongs to the acetokinase family. Homodimer. It depends on Mg(2+) as a cofactor. Mn(2+) serves as cofactor.

It is found in the cytoplasm. It catalyses the reaction acetate + ATP = acetyl phosphate + ADP. The protein operates within metabolic intermediate biosynthesis; acetyl-CoA biosynthesis; acetyl-CoA from acetate: step 1/2. In terms of biological role, catalyzes the formation of acetyl phosphate from acetate and ATP. Can also catalyze the reverse reaction. In Symbiobacterium thermophilum (strain DSM 24528 / JCM 14929 / IAM 14863 / T), this protein is Acetate kinase.